We begin with the raw amino-acid sequence, 139 residues long: mRNA stability protein mug134 (139 aa).

Residues 83–139 (IGKEIPSPDTIPHRVVSAGSPNKEPSLHTKRPSESSPSGASSRRESVTRHDLESNEN) are disordered. Over residues 124 to 139 (SRRESVTRHDLESNEN) the composition is skewed to basic and acidic residues.

Belongs to the endosulfine family.

It is found in the nucleus. The protein resides in the cytoplasm. Its function is as follows. Plays an essential role in initiation of the G0 program by preventing the degradation of specific nutrient-regulated mRNAs via the 5'-3' mRNA decay pathway. The chain is mRNA stability protein mug134 (mug134) from Schizosaccharomyces pombe (strain 972 / ATCC 24843) (Fission yeast).